Consider the following 192-residue polypeptide: Cytochrome b-245 light chain (192 aa).

The Cytoplasmic segment spans residues 2–7 (GQIEWA). Residues 8 to 30 (MWANEQALASGLILITGGIVATA) traverse the membrane as a helical segment. Residues 31–35 (GRFTQ) are Extracellular-facing. A helical membrane pass occupies residues 36–53 (WYFGAYSIAAGVLICLLE). At 54–69 (YPRGKRKKGSTMERCG) the chain is on the cytoplasmic side. An intramembrane segment occupies 70 to 80 (QKYLTSVVKLF). Topologically, residues 81 to 86 (GPLTRN) are cytoplasmic. The helical transmembrane segment at 87–104 (YYVRAALHFLLSVPAGFL) threads the bilayer. Position 105 (L105) is a topological domain, extracellular. Residues 106–126 (ATILGTVCLAIASVIYLLAAI) form a helical membrane-spanning segment. Residues 127–192 (RGEQWTPIEP…NPMPVTDEVV (66 aa)) lie on the Cytoplasmic side of the membrane. The interval 134-192 (IEPKPKERPQVGGTIKQPPTNPPPRPPAEVRKKPSEGEEEAASAGGPQVNPMPVTDEVV) is disordered. Position 147 is a phosphothreonine (T147). K149 participates in a covalent cross-link: Glycyl lysine isopeptide (Lys-Gly) (interchain with G-Cter in ubiquitin). Residues S168 and S176 each carry the phosphoserine modification.

Belongs to the p22phox family. In terms of assembly, component of the phagocyte NADPH oxidase core complex/cytochrome b558 complex, composed of CYBB (heavy chain (beta)) and CYBA (light chain (alpha)). Component of the phagocyte NADPH oxidase complex composed of an obligatory core heterodimer formed by the membrane proteins CYBA and CYBB and the cytosolic regulatory subunits NCF1/p47-phox, NCF2/p67-phox, NCF4/p40-phox and the small GTPase RAC1 or RAC2. Interacts with NCF1 (via SH3 domain). Interacts with SH3PXD2A. Interacts with DUOX1, DUOX2 and TPO. Interacts with NOX4; this interaction mediates superoxide generation. Interacts with calprotectin (S100A8/9). Interacts with GBP7. Interacts with NOXO1. Forms a heterodimer with NOX3 and is essential for activity and cell membrane localization of NOX3. Interacts with NOX1. In terms of processing, ubiquitinated at Lys-149 likely by RNF145. Phosphorylation at Thr-147 enhances NADPH oxidase activity by promoting NCF1/p47-phox binding. In terms of tissue distribution, the strongest level of expression is found in kidney, peritoneal neutrophils and peritoneal macrophages, and a lower level in spleen and small intestine. Very low level of expression can be noted in brain, liver, testis, and heart.

The protein localises to the cell membrane. Subunit of NADPH oxidase complexes that is required for the NADPH oxidase activity that generates, in various cell types, superoxide from molecular oxygen utilizing NADPH as an electron donor. Subunit of the phagocyte NADPH oxidase complex that mediates the transfer of electrons from cytosolic NADPH to O2 to produce the superoxide anion (O2(-)). In the activated complex, electrons are first transferred from NADPH to flavin adenine dinucleotide (FAD) and subsequently transferred via two heme molecules to molecular oxygen, producing superoxide through an outer-sphere reaction. Activation of the NADPH oxidase complex is initiated by the assembly of cytosolic subunits of the NADPH oxidase complex with the core NADPH oxidase complex to form a complex at the plasma membrane or phagosomal membrane. This activation process is initiated by phosphorylation dependent binding of the cytosolic NCF1/p47-phox subunit to the C-terminus of CYBA/p22-phox. Aassociates with NOX3 to form a functional NADPH oxidase constitutively generating superoxide. The polypeptide is Cytochrome b-245 light chain (Mus musculus (Mouse)).